Here is an 89-residue protein sequence, read N- to C-terminus: Small ribosomal subunit protein uS15 (89 aa).

It belongs to the universal ribosomal protein uS15 family. As to quaternary structure, part of the 30S ribosomal subunit. Forms a bridge to the 50S subunit in the 70S ribosome, contacting the 23S rRNA.

One of the primary rRNA binding proteins, it binds directly to 16S rRNA where it helps nucleate assembly of the platform of the 30S subunit by binding and bridging several RNA helices of the 16S rRNA. Functionally, forms an intersubunit bridge (bridge B4) with the 23S rRNA of the 50S subunit in the ribosome. The protein is Small ribosomal subunit protein uS15 of Parvibaculum lavamentivorans (strain DS-1 / DSM 13023 / NCIMB 13966).